The following is a 430-amino-acid chain: Trigger factor (430 aa).

Residues 163–248 (GNIAIIDFKG…IKDIKVKELP (86 aa)) form the PPIase FKBP-type domain.

The protein belongs to the FKBP-type PPIase family. Tig subfamily.

The protein resides in the cytoplasm. It carries out the reaction [protein]-peptidylproline (omega=180) = [protein]-peptidylproline (omega=0). Involved in protein export. Acts as a chaperone by maintaining the newly synthesized protein in an open conformation. Functions as a peptidyl-prolyl cis-trans isomerase. This chain is Trigger factor, found in Clostridium botulinum (strain Kyoto / Type A2).